Reading from the N-terminus, the 387-residue chain is Cyclin-B1-4 (387 aa).

Residues 1 to 29 (MASSRVSDLPHQRGIAGEIKPKNVAGHGR) form a disordered region.

This sequence belongs to the cyclin family. Cyclin AB subfamily.

The protein is Cyclin-B1-4 (CYCB1-4) of Arabidopsis thaliana (Mouse-ear cress).